We begin with the raw amino-acid sequence, 410 residues long: Cytohesin-2 (410 aa).

Residues 13–56 (PEERMELENIRRRKQELLVEIQRLREELSEAMSEVEGLEANEGS) adopt a coiled-coil conformation. Residues 54-241 (EGSKTLQRNR…RNLYDSIRNE (188 aa)) enclose the SEC7 domain. Residues 259-386 (NPDREGWLLK…WIKSIQAAVS (128 aa)) form the PH domain. A 1,2-diacyl-sn-glycero-3-phospho-(1D-myo-inositol-3,4,5-trisphosphate) is bound by residues 268–271 (KLGA), R290, Y301, R311, K349, N360, and H361. The segment at 397 to 405 (RKKRISVKK) is C-terminal autoinhibitory region.

As to quaternary structure, heteromer. Composed of TAMALIN, CYTH2 and at least one GRM1. Interacts with ARRB1. Interacts with ARL4D; the interaction is direct. Directly interacts with CCDC120 through the coiled coil domain; this interaction stabilizes CCDC120, possibly by preventing its ubiquitination, and is required for neurite growth in neuroblastoma cells. Interacts (via N-terminal domain) with INAVA (via N-terminal domain).

The protein resides in the cell membrane. It localises to the cytoplasm. Its subcellular location is the cell projection. The protein localises to the growth cone. Acts as a guanine-nucleotide exchange factor (GEF). Promotes guanine-nucleotide exchange on ARF1, ARF3 and ARF6. Promotes the activation of ARF factors through replacement of GDP with GTP. The cell membrane form, in association with ARL4 proteins, recruits ARF6 to the plasma membrane. Involved in neurite growth. The chain is Cytohesin-2 (CYTH2) from Bos taurus (Bovine).